The following is a 781-amino-acid chain: Serine/threonine-protein kinase PLK4 (781 aa).

Residues tyrosine 14–methionine 268 form the Protein kinase domain. ATP-binding positions include leucine 20–valine 28 and lysine 43. The Proton acceptor role is filled by aspartate 139. One can recognise a Cryptic POLO box 1 (CPB1) domain in the interval threonine 397–lysine 514. Positions glutamine 463–asparagine 486 are disordered. Over residues glutamine 473 to asparagine 486 the composition is skewed to polar residues. In terms of domain architecture, Cryptic POLO box 2 (CPB2) spans threonine 515–proline 618. The POLO box domain occupies proline 672–cysteine 751.

The protein belongs to the protein kinase superfamily. Ser/Thr protein kinase family. CDC5/Polo subfamily. Homodimer. Ubiquitinated by the SCF(Slimb) ubiquitin ligase complex; leading to its degradation by the proteasome during interphase and regulating centriole number and ensuring the block to centriole reduplication.

It localises to the cytoplasm. The protein resides in the cytoskeleton. It is found in the microtubule organizing center. The protein localises to the centrosome. Its subcellular location is the centriole. It carries out the reaction L-seryl-[protein] + ATP = O-phospho-L-seryl-[protein] + ADP + H(+). The catalysed reaction is L-threonyl-[protein] + ATP = O-phospho-L-threonyl-[protein] + ADP + H(+). Its function is as follows. Serine/threonine-protein kinase that plays a central role in centriole duplication. Able to trigger procentriole formation on the surface of the mother centriole cylinder, using mother centriole as a platform, leading to the recruitment of centriole biogenesis proteins such as sas-6. When overexpressed, it is able to induce centrosome amplification through the simultaneous generation of multiple procentrioles adjoining each parental centriole during S phase. Centrosome amplification following overexpression can initiate tumorigenesis, highlighting the importance of centrosome regulation in cancers. In Drosophila virilis (Fruit fly), this protein is Serine/threonine-protein kinase PLK4 (SAK).